Here is a 447-residue protein sequence, read N- to C-terminus: Na(+)-translocating NADH-quinone reductase subunit A (447 aa).

The protein belongs to the NqrA family. In terms of assembly, composed of six subunits; NqrA, NqrB, NqrC, NqrD, NqrE and NqrF.

The enzyme catalyses a ubiquinone + n Na(+)(in) + NADH + H(+) = a ubiquinol + n Na(+)(out) + NAD(+). NQR complex catalyzes the reduction of ubiquinone-1 to ubiquinol by two successive reactions, coupled with the transport of Na(+) ions from the cytoplasm to the periplasm. NqrA to NqrE are probably involved in the second step, the conversion of ubisemiquinone to ubiquinol. This is Na(+)-translocating NADH-quinone reductase subunit A from Haemophilus influenzae (strain ATCC 51907 / DSM 11121 / KW20 / Rd).